Consider the following 150-residue polypeptide: Small ribosomal subunit protein uS19y (150 aa).

It belongs to the universal ribosomal protein uS19 family.

It is found in the cytoplasm. The protein is Small ribosomal subunit protein uS19y (RPS15C) of Arabidopsis thaliana (Mouse-ear cress).